We begin with the raw amino-acid sequence, 684 residues long: Methionine--tRNA ligase (684 aa).

A 'HIGH' region motif is present at residues 15 to 25 (PYANGAIHLGH). The Zn(2+) site is built by Cys-146, Cys-149, Cys-159, and Cys-162. The short motif at 331-335 (KMSKS) is the 'KMSKS' region element. Lys-334 provides a ligand contact to ATP. One can recognise a tRNA-binding domain in the interval 582–684 (DFAKLDLRVA…SGVTAGMQVR (103 aa)).

The protein belongs to the class-I aminoacyl-tRNA synthetase family. MetG type 1 subfamily. In terms of assembly, homodimer. Requires Zn(2+) as cofactor.

The protein localises to the cytoplasm. It catalyses the reaction tRNA(Met) + L-methionine + ATP = L-methionyl-tRNA(Met) + AMP + diphosphate. Is required not only for elongation of protein synthesis but also for the initiation of all mRNA translation through initiator tRNA(fMet) aminoacylation. The protein is Methionine--tRNA ligase of Glaesserella parasuis serovar 5 (strain SH0165) (Haemophilus parasuis).